We begin with the raw amino-acid sequence, 294 residues long: Putative S-adenosyl-L-methionine-dependent methyltransferase RHA1_ro00605 (294 aa).

Residues Asp120 and 149-150 (DL) contribute to the S-adenosyl-L-methionine site.

It belongs to the UPF0677 family.

In terms of biological role, exhibits S-adenosyl-L-methionine-dependent methyltransferase activity. This chain is Putative S-adenosyl-L-methionine-dependent methyltransferase RHA1_ro00605, found in Rhodococcus jostii (strain RHA1).